The chain runs to 581 residues: Arginine--tRNA ligase (581 aa).

A 'HIGH' region motif is present at residues 126–136 (PNLAKEMHVGH).

This sequence belongs to the class-I aminoacyl-tRNA synthetase family. In terms of assembly, monomer.

The protein resides in the cytoplasm. It carries out the reaction tRNA(Arg) + L-arginine + ATP = L-arginyl-tRNA(Arg) + AMP + diphosphate. The polypeptide is Arginine--tRNA ligase (Shewanella amazonensis (strain ATCC BAA-1098 / SB2B)).